A 425-amino-acid chain; its full sequence is MTPTPTLIQRFLNGSLVLQIVIGIVAGLILASFSPTSALSVSFLGSLFVSALKAVAPILVFVLVASSIANQQKETRTNLKPIIKLYLLGTLFAASTAVMVSYFFPTTLVLVATDIQATPPNGILEVLNTLLFKIVDNPVNALVSGNFIGILAWAAGLGFALQRANQSTKQALHDISNAVTRIVHLVIRFAPLGIFGLVAGTIAETGFDALFGYTHLLAVLLGCMILIALVINPIIVYGKTKKNPYPLIFRCLRESGVTAFFTRSSAANIPVNMALCEKLELHKDTYSVSIPLGATINMAGASITITVLTLAAVHTLGIEFDIATAILLSVVAAVSACGASGVAGGSLLLIPLACGLFGVPNEVAMQVVAIGFIIGVVQDSAETALNSSTDVIFTAAACYAAEELPAADTIETLETLETLETTAKA.

The next 9 helical transmembrane spans lie at 11 to 31 (FLNGSLVLQIVIGIVAGLILA), 43 to 63 (FLGSLFVSALKAVAPILVFVL), 91 to 111 (LFAASTAVMVSYFFPTTLVLV), 141 to 161 (ALVSGNFIGILAWAAGLGFAL), 182 to 202 (IVHLVIRFAPLGIFGLVAGTI), 216 to 236 (LLAVLLGCMILIALVINPIIV), 290 to 310 (IPLGATINMAGASITITVLTL), 316 to 336 (LGIEFDIATAILLSVVAAVSA), and 363 to 383 (VAMQVVAIGFIIGVVQDSAET).

The protein belongs to the dicarboxylate/amino acid:cation symporter (DAACS) (TC 2.A.23) family.

It is found in the cell inner membrane. It catalyses the reaction L-serine(in) + Na(+)(in) = L-serine(out) + Na(+)(out). It carries out the reaction L-threonine(in) + Na(+)(in) = L-threonine(out) + Na(+)(out). Functionally, involved in the import of serine and threonine into the cell, with the concomitant import of sodium (symport system). The polypeptide is Serine/threonine transporter SstT (Psychromonas ingrahamii (strain DSM 17664 / CCUG 51855 / 37)).